The following is a 303-amino-acid chain: Zinc transporter ZIP9-A (303 aa).

The chain crosses the membrane as a helical span at residues 7-27; it reads ISLLSLAMLVGCYVSGIIPLA. An N-linked (GlcNAc...) asparagine glycan is attached at asparagine 29. The next 5 membrane-spanning stretches (helical) occupy residues 35-55, 102-122, 142-162, 172-192, and 206-226; these read LKLVTVLGAGLLCGTALAVII, AYIGVSLVLGFVFMLLVDQIG, ITTTLGLVVHAAADGVALGAA, LIVFVAIMLHKAPAAFGLVSF, and HLLVFALAAPVLSMLTYLGLS. The N-linked (GlcNAc...) asparagine glycan is linked to asparagine 237. 2 consecutive transmembrane segments (helical) span residues 240 to 260 and 282 to 302; these read GVAMLFSAGTFLYVATVHVLP and LEVCALVLGCLIPLVLSIGHQ.

Belongs to the ZIP transporter (TC 2.A.5) family.

The protein localises to the golgi apparatus. The protein resides in the trans-Golgi network membrane. It is found in the cell membrane. It localises to the cytoplasm. Its subcellular location is the perinuclear region. The protein localises to the mitochondrion. The protein resides in the nucleus. It carries out the reaction Zn(2+)(in) = Zn(2+)(out). Functionally, transports zinc ions across cell and organelle membranes into the cytoplasm and regulates intracellular zinc homeostasis. Participates in the zinc ions efflux out of the secretory compartments. Regulates intracellular zinc level, resulting in the enhancement of AKT1 and MAPK3/MAPK1 (Erk1/2) phosphorylation in response to the BCR activation. Also functions as a membrane androgen receptor that mediates, through a G protein, the non-classical androgen signaling pathway, characterized by the activation of MAPK3/MAPK1 (Erk1/2) and transcription factors CREB1 or ATF1. Moreover, has dual functions as a membrane-bound androgen receptor and as an androgen-dependent zinc transporter both of which are mediated through an inhibitory G protein (Gi) that mediates both MAP kinase and zinc signaling leading to the androgen-dependent apoptotic process. The polypeptide is Zinc transporter ZIP9-A (slc39a9-a) (Xenopus laevis (African clawed frog)).